The primary structure comprises 1317 residues: DNA-directed RNA polymerase subunit beta' (1317 aa).

Residues cysteine 60, cysteine 62, cysteine 75, and cysteine 78 each coordinate Zn(2+). Residues aspartate 535, aspartate 537, and aspartate 539 each coordinate Mg(2+). The Zn(2+) site is built by cysteine 890, cysteine 967, cysteine 974, and cysteine 977.

The protein belongs to the RNA polymerase beta' chain family. As to quaternary structure, the RNAP catalytic core consists of 2 alpha, 1 beta, 1 beta' and 1 omega subunit. When a sigma factor is associated with the core the holoenzyme is formed, which can initiate transcription. Requires Mg(2+) as cofactor. The cofactor is Zn(2+).

It carries out the reaction RNA(n) + a ribonucleoside 5'-triphosphate = RNA(n+1) + diphosphate. Its function is as follows. DNA-dependent RNA polymerase catalyzes the transcription of DNA into RNA using the four ribonucleoside triphosphates as substrates. The chain is DNA-directed RNA polymerase subunit beta' from Mycolicibacterium smegmatis (strain ATCC 700084 / mc(2)155) (Mycobacterium smegmatis).